The primary structure comprises 998 residues: Regulator of telomere elongation helicase 1 homolog (998 aa).

Positions 7-324 (AGIPVHFPFE…KEMLLELEKA (318 aa)) constitute a Helicase ATP-binding domain. ATP is bound at residue 42–49 (SPTGTGKT). [4Fe-4S] cluster is bound by residues Cys148, Cys166, Cys175, and Cys211. A DEAH box motif is present at residues 254-257 (DEAH). Positions 426–454 (QNAGKPAPKQQQQGGWLGKGNNTSNSSSS) are disordered. A Phosphothreonine modification is found at Thr887.

Belongs to the helicase family. RAD3/XPD subfamily.

It localises to the nucleus. The catalysed reaction is ATP + H2O = ADP + phosphate + H(+). Its function is as follows. A probable ATP-dependent DNA helicase implicated in DNA repair and the maintenance of genomic stability. Acts as an anti-recombinase to counteract toxic recombination and limit crossover during meiosis. Regulates meiotic recombination and crossover homeostasis by physically dissociating strand invasion events and thereby promotes noncrossover repair by meiotic synthesis dependent strand annealing (SDSA) as well as disassembly of D loop recombination intermediates. The sequence is that of Regulator of telomere elongation helicase 1 homolog from Drosophila willistoni (Fruit fly).